The sequence spans 348 residues: Protein RecA (348 aa).

64–71 contacts ATP; that stretch reads GPESSGKT. The span at 325–335 shows a compositional bias: basic and acidic residues; the sequence is YEIDGSNKEPL. Residues 325-348 form a disordered region; the sequence is YEIDGSNKEPLDEGEETLSLLDDE. Acidic residues predominate over residues 336–348; it reads DEGEETLSLLDDE.

The protein belongs to the RecA family.

The protein resides in the cytoplasm. Can catalyze the hydrolysis of ATP in the presence of single-stranded DNA, the ATP-dependent uptake of single-stranded DNA by duplex DNA, and the ATP-dependent hybridization of homologous single-stranded DNAs. It interacts with LexA causing its activation and leading to its autocatalytic cleavage. This is Protein RecA from Listeria monocytogenes serotype 4b (strain CLIP80459).